Consider the following 90-residue polypeptide: Small ribosomal subunit protein uS15 (90 aa).

Belongs to the universal ribosomal protein uS15 family. Part of the 30S ribosomal subunit. Forms a bridge to the 50S subunit in the 70S ribosome, contacting the 23S rRNA.

In terms of biological role, one of the primary rRNA binding proteins, it binds directly to 16S rRNA where it helps nucleate assembly of the platform of the 30S subunit by binding and bridging several RNA helices of the 16S rRNA. Its function is as follows. Forms an intersubunit bridge (bridge B4) with the 23S rRNA of the 50S subunit in the ribosome. This is Small ribosomal subunit protein uS15 from Paraburkholderia xenovorans (strain LB400).